Consider the following 456-residue polypeptide: MPQNTLNIVILAAGKGTRMYSKMPKVLHEIGGETMLGRVIDTAAALNPQNICVVVGHGKEQVLDTVKRDVVWVEQTEQLGTGHAVKTALPHLAAEGRTLVLYGDVPLIDVETLETLLEAAGNEVGLLTDVPADPSGLGRIIRDSSGSVTAIVEEKDADAAQKAVKEINTGILVLPNAKLEAWLNSLSSNNAQGEYYLTDLIAKAVADGIKIHPVQVRSSHLAAGVNNKLQLAELERIFQTEQAQELLKAGVTLRDPARFDLRGRLKHGQDVVIDVNCIFEGKIELGDNVEIGANCVIKNAKIGANSKIAPFSHLEGCEVGENNQIGPYARLRPQAKLADDVHVGNFVEIKNAAIGKGTKANHLTYIGDAEVGSKTNFGAGTIIANYDGVHKHKTVIGDEVRIGSNCVLVSPVKIGNKVTTGAGSTITRNVEDGKLALARSRQTIIDGWVRPEKNKQ.

The segment at 1 to 228 is pyrophosphorylase; that stretch reads MPQNTLNIVI…SHLAAGVNNK (228 aa). UDP-N-acetyl-alpha-D-glucosamine contacts are provided by residues 11 to 14, Lys25, Gln75, 80 to 81, 102 to 104, Gly138, Glu153, Asn168, and Asn226; these read LAAG, GT, and YGD. Asp104 serves as a coordination point for Mg(2+). Asn226 is a binding site for Mg(2+). Residues 229 to 249 are linker; it reads LQLAELERIFQTEQAQELLKA. Residues 250–456 form an N-acetyltransferase region; it reads GVTLRDPARF…GWVRPEKNKQ (207 aa). 2 residues coordinate UDP-N-acetyl-alpha-D-glucosamine: Arg332 and Lys350. His362 acts as the Proton acceptor in catalysis. Tyr365 and Asn376 together coordinate UDP-N-acetyl-alpha-D-glucosamine. Acetyl-CoA contacts are provided by residues Ala379, 385-386, Ser404, Ala422, and Arg439; that span reads NY.

This sequence in the N-terminal section; belongs to the N-acetylglucosamine-1-phosphate uridyltransferase family. In the C-terminal section; belongs to the transferase hexapeptide repeat family. In terms of assembly, homotrimer. It depends on Mg(2+) as a cofactor.

The protein resides in the cytoplasm. The catalysed reaction is alpha-D-glucosamine 1-phosphate + acetyl-CoA = N-acetyl-alpha-D-glucosamine 1-phosphate + CoA + H(+). It carries out the reaction N-acetyl-alpha-D-glucosamine 1-phosphate + UTP + H(+) = UDP-N-acetyl-alpha-D-glucosamine + diphosphate. It functions in the pathway nucleotide-sugar biosynthesis; UDP-N-acetyl-alpha-D-glucosamine biosynthesis; N-acetyl-alpha-D-glucosamine 1-phosphate from alpha-D-glucosamine 6-phosphate (route II): step 2/2. Its pathway is nucleotide-sugar biosynthesis; UDP-N-acetyl-alpha-D-glucosamine biosynthesis; UDP-N-acetyl-alpha-D-glucosamine from N-acetyl-alpha-D-glucosamine 1-phosphate: step 1/1. It participates in bacterial outer membrane biogenesis; LPS lipid A biosynthesis. Catalyzes the last two sequential reactions in the de novo biosynthetic pathway for UDP-N-acetylglucosamine (UDP-GlcNAc). The C-terminal domain catalyzes the transfer of acetyl group from acetyl coenzyme A to glucosamine-1-phosphate (GlcN-1-P) to produce N-acetylglucosamine-1-phosphate (GlcNAc-1-P), which is converted into UDP-GlcNAc by the transfer of uridine 5-monophosphate (from uridine 5-triphosphate), a reaction catalyzed by the N-terminal domain. This chain is Bifunctional protein GlmU, found in Neisseria meningitidis serogroup A / serotype 4A (strain DSM 15465 / Z2491).